Here is a 293-residue protein sequence, read N- to C-terminus: Ribonuclease HIII (293 aa).

One can recognise an RNase H type-2 domain in the interval 78-293 (LPLIGTDEVG…TEKAKKRLER (216 aa)). Asp84, Glu85, and Asp187 together coordinate a divalent metal cation.

The protein belongs to the RNase HII family. RnhC subfamily. Requires Mn(2+) as cofactor. It depends on Mg(2+) as a cofactor.

The protein resides in the cytoplasm. It carries out the reaction Endonucleolytic cleavage to 5'-phosphomonoester.. Endonuclease that specifically degrades the RNA of RNA-DNA hybrids. In Streptococcus pneumoniae serotype 19F (strain G54), this protein is Ribonuclease HIII.